A 257-amino-acid chain; its full sequence is Probable enoyl-CoA hydratase echA8 (257 aa).

Belongs to the enoyl-CoA hydratase/isomerase family.

The catalysed reaction is a (3S)-3-hydroxyacyl-CoA = a (2E)-enoyl-CoA + H2O. It catalyses the reaction a 4-saturated-(3S)-3-hydroxyacyl-CoA = a (3E)-enoyl-CoA + H2O. Its function is as follows. Could possibly oxidize fatty acids using specific components. This chain is Probable enoyl-CoA hydratase echA8 (echA8), found in Mycobacterium tuberculosis (strain CDC 1551 / Oshkosh).